The following is a 339-amino-acid chain: uncharacterized protein (339 aa).

28–35 (GPINSGKT) serves as a coordination point for ATP.

The protein belongs to the archaeal ATPase family.

This is an uncharacterized protein from Pyrococcus abyssi (strain GE5 / Orsay).